Reading from the N-terminus, the 297-residue chain is Formamidopyrimidine-DNA glycosylase (297 aa).

The active-site Schiff-base intermediate with DNA is the Pro-2. Glu-3 serves as the catalytic Proton donor. Lys-61 serves as the catalytic Proton donor; for beta-elimination activity. DNA is bound by residues Arg-120 and Arg-176. The FPG-type zinc finger occupies 262-296 (HVYGRQGQPCDRCGTAIVRESFMNRGSHFCPRCQR). Arg-286 serves as the catalytic Proton donor; for delta-elimination activity.

It belongs to the FPG family. Monomer. Zn(2+) serves as cofactor.

The catalysed reaction is Hydrolysis of DNA containing ring-opened 7-methylguanine residues, releasing 2,6-diamino-4-hydroxy-5-(N-methyl)formamidopyrimidine.. It carries out the reaction 2'-deoxyribonucleotide-(2'-deoxyribose 5'-phosphate)-2'-deoxyribonucleotide-DNA = a 3'-end 2'-deoxyribonucleotide-(2,3-dehydro-2,3-deoxyribose 5'-phosphate)-DNA + a 5'-end 5'-phospho-2'-deoxyribonucleoside-DNA + H(+). In terms of biological role, involved in base excision repair of DNA damaged by oxidation or by mutagenic agents. Acts as a DNA glycosylase that recognizes and removes damaged bases. Has a preference for oxidized purines, such as 7,8-dihydro-8-oxoguanine (8-oxoG). Has AP (apurinic/apyrimidinic) lyase activity and introduces nicks in the DNA strand. Cleaves the DNA backbone by beta-delta elimination to generate a single-strand break at the site of the removed base with both 3'- and 5'-phosphates. This is Formamidopyrimidine-DNA glycosylase from Leifsonia xyli subsp. xyli (strain CTCB07).